We begin with the raw amino-acid sequence, 343 residues long: MSLAGKKITVHDMSLRDGMHPKRHQITLDQMRDIARGLDAAGVPLIEVTHGDGLGGASVNYGFPAHTDEAYLSAVIPELKQARVSALLLPGIGTVEHLRMAHALGVGTIRVATHCTEADVSEQHIGLARTLGLDTVGFLMMAHMSSPAQLVVQAKLMESYGANCIYITDSAGHMLPDDVTARIGQVRDALKPETELGFHGHHNLAMGVANSVAAVAAGANRIDAAAAGLGAGAGNTPMEVFVAVCDRMGIETGVDVFAISDVAEDLVVPIMDAPIRLDRDALTLGYAGVYSSFLLFAKRAEAKYGIPARDILVELGRQRLVGGQEDMIEDAALTMVRAREVAA.

Residues 8-260 (ITVHDMSLRD…ETGVDVFAIS (253 aa)) enclose the Pyruvate carboxyltransferase domain. Position 16-17 (16-17 (RD)) interacts with substrate. Asp17 is a binding site for Mn(2+). His20 (proton acceptor) is an active-site residue. Positions 170 and 199 each coordinate substrate. Mn(2+) contacts are provided by His199 and His201. Residue Tyr290 coordinates substrate.

This sequence belongs to the 4-hydroxy-2-oxovalerate aldolase family.

The catalysed reaction is (S)-4-hydroxy-2-oxopentanoate = acetaldehyde + pyruvate. This Burkholderia cenocepacia (strain ATCC BAA-245 / DSM 16553 / LMG 16656 / NCTC 13227 / J2315 / CF5610) (Burkholderia cepacia (strain J2315)) protein is 4-hydroxy-2-oxovalerate aldolase 1 (bphI).